Here is a 175-residue protein sequence, read N- to C-terminus: Interferon gamma (175 aa).

The N-terminal stretch at 1 to 23 (MNATCCILALLLCLTQAISGCYC) is a signal peptide. Gln24 is modified (pyrrolidone carboxylic acid). 2 N-linked (GlcNAc...) asparagine glycosylation sites follow: Asn39 and Asn106.

This sequence belongs to the type II (or gamma) interferon family. Homodimer. Interacts with IFNGR1 (via extracellular domain); this interaction promotes IFNGR1 dimerization. Released primarily from activated T lymphocytes.

Its subcellular location is the secreted. In terms of biological role, type II interferon produced by immune cells such as T-cells and NK cells that plays crucial roles in antimicrobial, antiviral, and antitumor responses by activating effector immune cells and enhancing antigen presentation. Primarily signals through the JAK-STAT pathway after interaction with its receptor IFNGR1 to affect gene regulation. Upon IFNG binding, IFNGR1 intracellular domain opens out to allow association of downstream signaling components JAK2, JAK1 and STAT1, leading to STAT1 activation, nuclear translocation and transcription of IFNG-regulated genes. Many of the induced genes are transcription factors such as IRF1 that are able to further drive regulation of a next wave of transcription. Plays a role in class I antigen presentation pathway by inducing a replacement of catalytic proteasome subunits with immunoproteasome subunits. In turn, increases the quantity, quality, and repertoire of peptides for class I MHC loading. Increases the efficiency of peptide generation also by inducing the expression of activator PA28 that associates with the proteasome and alters its proteolytic cleavage preference. Up-regulates as well MHC II complexes on the cell surface by promoting expression of several key molecules such as cathepsins B/CTSB, H/CTSH, and L/CTSL. Participates in the regulation of hematopoietic stem cells during development and under homeostatic conditions by affecting their development, quiescence, and differentiation. The polypeptide is Interferon gamma (IFNG) (Peromyscus maniculatus (North American deer mouse)).